The following is a 900-amino-acid chain: MGHTSYAVVDLETTGNQLDYDEIIQIGITFVSNNKISGTYHSMIRTDLDIPPFIQALTSIEDTMLEQAPYFHEIAQEIYKQLKDRVFVAHNVDFDLNFIKKAFQNCNIDFKPKKVLDTLELFKIAYPTDKSYQLSELAEAHDIPLDNAHRADEDATTTALLMIKAFQKFEQLPIDTLKQLYYLSKNLKYDLFNVLFEMVRQHENSPLDNQYGQFEQIIYKKQIDLKAPKTSFNGSLKDLYSEVVKSLNLTYRPQQLYLSEIILEQLMHNDKAMIEAPLGSGKSLAYLLAALMYNIETGRHVMISTNTKLLQNQLLLKDIPSINQALNFKINATLIKSKSEYISLGLISQILKDETTNYEVNILKMQLLTWIIETETGDIQDLNLKGGQKMYFDQKIETYVPVRHDMHYYNYIKRNAHHIQIGITNHAHLIHSDQENSIYQLFDDCIIDEAHRLPDYALNQVTNDLDYSDLKYQLGLIGKNENEKLLKAIDKLEQQRILERLDIAPIDVFGLKMNISEIHDLNERLFNHIFEIIQNSDVYDDDIHRHHYVFEFDSTQILKDLHLIVDKINKTLEIFNGMTHKTIKTLRKQLLYINDTYRNIEQSLKDKHTAYLSIRNLTQKSTIKLIVKDYAVRDILTTRVLDKFNSLTFISGTLTFNHKFDAFKNWFKEDVHFNTYQVPSTLSNHANTNVYIPSDVSSYNFKNIDDYVASIVDYIQEYVTITDSKCLVLFTSYRMMHMVQELLNELPTFEDYVVLTQQQNQNYKIVQQFNNFDKTILLGTSTFFEGFDYQAKGIKCVMIAKLPFMNKYNTKHWLMDSEFDSTFKDYVLPDAVTRFRQGLGRLIRNEDDQGLIVSFDDRLVSSNYKNFFAQTLENYKQKKGDIKQFSKLVNKIQHNIDANK.

Residues 8–161 enclose the Exonuclease domain; the sequence is VVDLETTGNQ…DEDATTTALL (154 aa). Positions 241 to 496 constitute a Helicase ATP-binding domain; sequence SEVVKSLNLT…KAIDKLEQQR (256 aa). An ATP-binding site is contributed by 276–283; it reads APLGSGKS. Positions 448 to 451 match the DEAH box motif; the sequence is DEAH. Positions 713–893 constitute a Helicase C-terminal domain; the sequence is DYIQEYVTIT…QFSKLVNKIQ (181 aa).

It belongs to the helicase family. DinG subfamily. Type 2 sub-subfamily.

3'-5' exonuclease. The protein is 3'-5' exonuclease DinG of Staphylococcus haemolyticus (strain JCSC1435).